A 549-amino-acid polypeptide reads, in one-letter code: Speedy protein E3 (549 aa).

Residues 1–15 show a composition bias toward low complexity; that stretch reads MTSHQPQPQEEQSPQ. 5 disordered regions span residues 1–74, 126–145, 188–218, 261–291, and 334–364; these read MTSH…EPEE, KRECLDESDDEPEKELAPEP, and SPPRRSLGCKRKRECLDESDDEPEKELAPEP. Acidic residues-rich tracts occupy residues 58–74, 131–145, 204–218, 277–291, and 350–364; these read DESDDEPEKELAPEPEE and DESDDEPEKELAPEP.

This sequence belongs to the Speedy/Ringo family. As to expression, predominantly expressed in testis and spleen.

The chain is Speedy protein E3 from Homo sapiens (Human).